A 313-amino-acid chain; its full sequence is MLNRSKMLQEIDNLLTSEGYKTSNIYDQGSFDLVARKNLLILLLKTFLNIDSINEANAHEMKQLANIFLASPIIIGEKSRNGILEEGVIYERYDIPAISFETLKNMILYKEYPEILADRGGYFVKVDGNVIKQYREEYSLSLKDLADLAHVSRATMYKYENEIVRANTETAMILEEILNTKVTLDIDLLKPTISEDIEYSNVEGADDLSKLGYGILSTNKSPFDAVAKMKSSKDKSSLLTNVEKNRSEKTLKRMAIPLKDLSMITSSEPVFIINNDKIKDSLGTIPVIKSWELKEFENPSELLKIIRERKDNM.

In terms of domain architecture, HTH cro/C1-type spans 131 to 189 (IKQYREEYSLSLKDLADLAHVSRATMYKYENEIVRANTETAMILEEILNTKVTLDIDLL). Residues 142–161 (LKDLADLAHVSRATMYKYEN) constitute a DNA-binding region (H-T-H motif).

This chain is Putative HTH-type transcriptional regulatory protein Msm_0453, found in Methanobrevibacter smithii (strain ATCC 35061 / DSM 861 / OCM 144 / PS).